The following is a 363-amino-acid chain: Dihydroorotate dehydrogenase (quinone) (363 aa).

FMN-binding positions include 62–66 (AGFDK) and T86. Residue K66 participates in substrate binding. 111–115 (NRMGF) provides a ligand contact to substrate. Residues N142 and N175 each coordinate FMN. A substrate-binding site is contributed by N175. The active-site Nucleophile is the S178. N180 contributes to the substrate binding site. FMN contacts are provided by K216 and T244. 245 to 246 (NT) is a substrate binding site. FMN-binding positions include G267, G296, and 317 to 318 (YT).

The protein belongs to the dihydroorotate dehydrogenase family. Type 2 subfamily. Monomer. FMN is required as a cofactor.

It localises to the cell membrane. It catalyses the reaction (S)-dihydroorotate + a quinone = orotate + a quinol. The protein operates within pyrimidine metabolism; UMP biosynthesis via de novo pathway; orotate from (S)-dihydroorotate (quinone route): step 1/1. Its function is as follows. Catalyzes the conversion of dihydroorotate to orotate with quinone as electron acceptor. This is Dihydroorotate dehydrogenase (quinone) from Anaeromyxobacter sp. (strain Fw109-5).